The sequence spans 234 residues: tRNA (guanine-N(1)-)-methyltransferase (234 aa).

S-adenosyl-L-methionine-binding positions include glycine 115 and 135–140 (VGDYIL).

Belongs to the RNA methyltransferase TrmD family. As to quaternary structure, homodimer.

It is found in the cytoplasm. It carries out the reaction guanosine(37) in tRNA + S-adenosyl-L-methionine = N(1)-methylguanosine(37) in tRNA + S-adenosyl-L-homocysteine + H(+). Functionally, specifically methylates guanosine-37 in various tRNAs. This Rickettsia typhi (strain ATCC VR-144 / Wilmington) protein is tRNA (guanine-N(1)-)-methyltransferase.